Reading from the N-terminus, the 607-residue chain is Glutamine--fructose-6-phosphate aminotransferase [isomerizing] (607 aa).

Catalysis depends on C2, which acts as the Nucleophile; for GATase activity. Residues 2–217 (CGIIGIIGND…DGDWAVLTRN (216 aa)) enclose the Glutamine amidotransferase type-2 domain. SIS domains lie at 283–422 (IGID…ARGA) and 455–597 (VCHD…VDQP). Residue K602 is the For Fru-6P isomerization activity of the active site.

As to quaternary structure, homodimer.

The protein localises to the cytoplasm. The enzyme catalyses D-fructose 6-phosphate + L-glutamine = D-glucosamine 6-phosphate + L-glutamate. Its function is as follows. Catalyzes the first step in hexosamine metabolism, converting fructose-6P into glucosamine-6P using glutamine as a nitrogen source. This is Glutamine--fructose-6-phosphate aminotransferase [isomerizing] from Brucella abortus biovar 1 (strain 9-941).